The chain runs to 263 residues: Probable septum site-determining protein MinC (263 aa).

The segment at 107–159 is disordered; it reads LPPSGARERPLDIKDSAPRKPAEEPSPSAGEARPEPAKAEEKPAEPVSRPTKV. Basic and acidic residues-rich tracts occupy residues 112–129 and 138–150; these read ARER…KPAE and ARPE…EKPA.

This sequence belongs to the MinC family. As to quaternary structure, interacts with MinD and FtsZ.

Cell division inhibitor that blocks the formation of polar Z ring septums. Rapidly oscillates between the poles of the cell to destabilize FtsZ filaments that have formed before they mature into polar Z rings. Prevents FtsZ polymerization. The polypeptide is Probable septum site-determining protein MinC (Pseudomonas aeruginosa (strain LESB58)).